A 101-amino-acid polypeptide reads, in one-letter code: Conantokin-L (101 aa).

The N-terminal stretch at 1-21 (MQLYTYLYLLVPLVTFHLILG) is a signal peptide. Positions 22–80 (TGTLDHGGALTERRSTDAIALKPEPVLLQKSSARSTDDNGNDRLTQMKRILKKRGNKAR) are excised as a propeptide. Glu-83, Glu-84, Glu-91, and Glu-95 each carry 4-carboxyglutamate. 2 residues coordinate a divalent metal cation: Glu-91 and Glu-95. Asparagine amide is present on Asn-99.

This sequence belongs to the conotoxin B superfamily. Ca(2+) serves as cofactor. The cofactor is Mg(2+). Expressed by the venom duct.

It is found in the secreted. Conantokins inhibit N-methyl-D-aspartate (NMDA) receptors. This toxin is far less potent as an anticonvulsant compound than conantokin-R. It induces sleep-like symptoms in mice. The protein is Conantokin-L of Conus lynceus (Lynceus cone).